Reading from the N-terminus, the 77-residue chain is Sec-independent protein translocase protein TatA (77 aa).

A helical membrane pass occupies residues 1 to 21 (MGSLSIWHWIVVIAVVLLLFG). Positions 43-60 (MQDDDKAPEKTEPVKSID) are enriched in basic and acidic residues. Positions 43–77 (MQDDDKAPEKTEPVKSIDHGATPSATRTDVGSKAV) are disordered.

This sequence belongs to the TatA/E family. In terms of assembly, the Tat system comprises two distinct complexes: a TatABC complex, containing multiple copies of TatA, TatB and TatC subunits, and a separate TatA complex, containing only TatA subunits. Substrates initially bind to the TatABC complex, which probably triggers association of the separate TatA complex to form the active translocon.

The protein resides in the cell inner membrane. Its function is as follows. Part of the twin-arginine translocation (Tat) system that transports large folded proteins containing a characteristic twin-arginine motif in their signal peptide across membranes. TatA could form the protein-conducting channel of the Tat system. This Bradyrhizobium sp. (strain BTAi1 / ATCC BAA-1182) protein is Sec-independent protein translocase protein TatA.